Consider the following 194-residue polypeptide: CASP-like protein 2C1 (194 aa).

The Cytoplasmic segment spans residues M1 to T18. The helical transmembrane segment at E19 to L39 threads the bilayer. Residues N40 to Q59 are Extracellular-facing. The chain crosses the membrane as a helical span at residues A60–L80. The Cytoplasmic segment spans residues R81 to K109. Residues G110 to L130 traverse the membrane as a helical segment. Residues Y131–Q151 are Extracellular-facing. The helical transmembrane segment at V152 to V172 threads the bilayer. At S173–G194 the chain is on the cytoplasmic side.

The protein belongs to the Casparian strip membrane proteins (CASP) family. As to quaternary structure, homodimer and heterodimers.

The protein localises to the cell membrane. The protein is CASP-like protein 2C1 of Oryza sativa subsp. japonica (Rice).